A 594-amino-acid polypeptide reads, in one-letter code: Neuronal PAS domain-containing protein 1 (594 aa).

The region spanning 45–98 is the bHLH domain; sequence QRKEKSRNAARWRRGKENLEFFELAKLLPLPGAISSQLDKASIVRLSVTYLRLR. One can recognise a PAS 1 domain in the interval 135-205; the sequence is EQHLGGHILQ…EQLGLRAASI (71 aa). Residues 206–237 form a disordered region; sequence GPPTPPSVSSSSSSSSSSLVDTPEIEASPTEA. A compositionally biased stretch (low complexity) spans 212 to 223; the sequence is SVSSSSSSSSSS. The 67-residue stretch at 294–360 folds into the PAS 2 domain; that stretch reads APLAELPLHG…IRQSHLDLLD (67 aa). The 44-residue stretch at 366–409 folds into the PAC domain; it reads TGYYRWLQRAGGFVWLQSVATVAGNGKSTGEHHVLWVSHVLSNA. The disordered stretch occupies residues 427–498; that stretch reads QEEPSRPGPE…DPPAPPRPEF (72 aa). A compositionally biased stretch (basic and acidic residues) spans 453 to 480; sequence DQDKDKDPQARGKRIKVEASPKEARGSE.

Efficient DNA binding requires dimerization with another bHLH protein. Interacts with ARNT; forms a heterodimer that binds core DNA sequence 5'-[AG]CGTG-3' within the hypoxia response element (HRE) leading to a transcriptional repressor on its target gene TH. Expressed in brain in inhibitory interneurons. Also found in spinal cord.

Its subcellular location is the nucleus. Functionally, may control regulatory pathways relevant to schizophrenia and to psychotic illness. May play a role in late central nervous system development by modulating EPO expression in response to cellular oxygen level. Forms a heterodimer that binds core DNA sequence 5'-TACGTG-3' within the hypoxia response element (HRE) leading to transcriptional repression on its target gene TH. This is Neuronal PAS domain-containing protein 1 (Npas1) from Mus musculus (Mouse).